The primary structure comprises 623 residues: Glutathione import ATP-binding protein GsiA (623 aa).

ABC transporter domains follow at residues 15-269 (VENL…RALL) and 314-564 (LRVR…RKLL). Residues 49–56 (GESGSGKS) and 357–364 (GESGSGKS) contribute to the ATP site.

It belongs to the ABC transporter superfamily. Glutathione importer (TC 3.A.1.5.11) family. The complex is composed of two ATP-binding proteins (GsiA), two transmembrane proteins (GsiC and GsiD) and a solute-binding protein (GsiB).

It is found in the cell inner membrane. The catalysed reaction is glutathione(out) + ATP + H2O = glutathione(in) + ADP + phosphate + H(+). In terms of biological role, part of the ABC transporter complex GsiABCD involved in glutathione import. Responsible for energy coupling to the transport system. The chain is Glutathione import ATP-binding protein GsiA from Escherichia coli O157:H7.